We begin with the raw amino-acid sequence, 180 residues long: Riboflavin kinase (180 aa).

Mg(2+) contacts are provided by threonine 40 and asparagine 42. Glutamate 117 (nucleophile) is an active-site residue.

It belongs to the flavokinase family. Zn(2+) serves as cofactor. Mg(2+) is required as a cofactor.

It carries out the reaction riboflavin + ATP = FMN + ADP + H(+). The protein operates within cofactor biosynthesis; FMN biosynthesis; FMN from riboflavin (ATP route): step 1/1. In terms of biological role, catalyzes the phosphorylation of riboflavin (vitamin B2) to form flavin mononucleotide (FMN) coenzyme. The chain is Riboflavin kinase (FMN1) from Meyerozyma guilliermondii (strain ATCC 6260 / CBS 566 / DSM 6381 / JCM 1539 / NBRC 10279 / NRRL Y-324) (Yeast).